A 92-amino-acid polypeptide reads, in one-letter code: CRISPR-associated endoribonuclease Cas2 1 (92 aa).

Mg(2+) is bound at residue D10.

It belongs to the CRISPR-associated endoribonuclease Cas2 protein family. As to quaternary structure, homodimer, forms a heterotetramer with a Cas1 homodimer. Mg(2+) is required as a cofactor.

In terms of biological role, CRISPR (clustered regularly interspaced short palindromic repeat), is an adaptive immune system that provides protection against mobile genetic elements (viruses, transposable elements and conjugative plasmids). CRISPR clusters contain sequences complementary to antecedent mobile elements and target invading nucleic acids. CRISPR clusters are transcribed and processed into CRISPR RNA (crRNA). Functions as a ssRNA-specific endoribonuclease. Involved in the integration of spacer DNA into the CRISPR cassette. The chain is CRISPR-associated endoribonuclease Cas2 1 from Thermodesulfovibrio yellowstonii (strain ATCC 51303 / DSM 11347 / YP87).